Consider the following 258-residue polypeptide: Glucose 1-dehydrogenase 2 (258 aa).

NADP(+) is bound at residue 11–35 (IVTGSSKGIGKAIAERFGKEKMNVV). Serine 146 contributes to the substrate binding site. The active-site Proton acceptor is tyrosine 159.

Belongs to the short-chain dehydrogenases/reductases (SDR) family. As to quaternary structure, homotetramer.

It carries out the reaction D-glucose + NAD(+) = D-glucono-1,5-lactone + NADH + H(+). The enzyme catalyses D-glucose + NADP(+) = D-glucono-1,5-lactone + NADPH + H(+). The protein is Glucose 1-dehydrogenase 2 (ycdF) of Bacillus subtilis (strain 168).